A 134-amino-acid chain; its full sequence is U-scoloptoxin(05)-Er2a (134 aa).

Positions 1–19 are cleaved as a signal peptide; that stretch reads MTFVVAAVVLLTVVPLATP.

It belongs to the scoloptoxin-05 family. Contains 5 disulfide bonds. Expressed by the venom gland.

Its subcellular location is the secreted. The polypeptide is U-scoloptoxin(05)-Er2a (Ethmostigmus rubripes (Giant centipede)).